The following is a 346-amino-acid chain: Phosphoribosylformylglycinamidine cyclo-ligase (346 aa).

This sequence belongs to the AIR synthase family.

It localises to the cytoplasm. The catalysed reaction is 2-formamido-N(1)-(5-O-phospho-beta-D-ribosyl)acetamidine + ATP = 5-amino-1-(5-phospho-beta-D-ribosyl)imidazole + ADP + phosphate + H(+). The protein operates within purine metabolism; IMP biosynthesis via de novo pathway; 5-amino-1-(5-phospho-D-ribosyl)imidazole from N(2)-formyl-N(1)-(5-phospho-D-ribosyl)glycinamide: step 2/2. The chain is Phosphoribosylformylglycinamidine cyclo-ligase from Proteus mirabilis (strain HI4320).